The sequence spans 152 residues: Transcriptional regulator MraZ (152 aa).

SpoVT-AbrB domains lie at 5-52 and 81-124; these read ATLV…TLPE and ASEC…DETT.

Belongs to the MraZ family. As to quaternary structure, forms oligomers.

It localises to the cytoplasm. It is found in the nucleoid. Negatively regulates its own expression and that of the subsequent genes in the proximal part of the division and cell wall (dcw) gene cluster. Acts by binding directly to DNA. May also regulate the expression of genes outside the dcw cluster. This Enterobacter sp. (strain 638) protein is Transcriptional regulator MraZ.